Here is a 254-residue protein sequence, read N- to C-terminus: 14-3-3-like protein RA215 (254 aa).

This sequence belongs to the 14-3-3 family.

This chain is 14-3-3-like protein RA215, found in Solanum tuberosum (Potato).